The sequence spans 396 residues: 1-deoxy-D-xylulose 5-phosphate reductoisomerase (396 aa).

NADPH-binding residues include Thr10, Gly11, Ser12, Ile13, Gly36, Lys37, Asn38, and Asn124. Lys125 contacts 1-deoxy-D-xylulose 5-phosphate. Glu126 lines the NADPH pocket. Asp150 is a Mn(2+) binding site. Positions 151, 152, 186, and 209 each coordinate 1-deoxy-D-xylulose 5-phosphate. A Mn(2+)-binding site is contributed by Glu152. Residue Gly215 coordinates NADPH. 1-deoxy-D-xylulose 5-phosphate is bound by residues Ser222, Asn227, Lys228, and Glu231. Glu231 provides a ligand contact to Mn(2+).

The protein belongs to the DXR family. The cofactor is Mg(2+). It depends on Mn(2+) as a cofactor.

It catalyses the reaction 2-C-methyl-D-erythritol 4-phosphate + NADP(+) = 1-deoxy-D-xylulose 5-phosphate + NADPH + H(+). The protein operates within isoprenoid biosynthesis; isopentenyl diphosphate biosynthesis via DXP pathway; isopentenyl diphosphate from 1-deoxy-D-xylulose 5-phosphate: step 1/6. Its function is as follows. Catalyzes the NADPH-dependent rearrangement and reduction of 1-deoxy-D-xylulose-5-phosphate (DXP) to 2-C-methyl-D-erythritol 4-phosphate (MEP). In Haemophilus ducreyi (strain 35000HP / ATCC 700724), this protein is 1-deoxy-D-xylulose 5-phosphate reductoisomerase.